The sequence spans 426 residues: Serine--tRNA ligase (426 aa).

232-234 (TAE) is a binding site for L-serine. 263–265 (RSE) serves as a coordination point for ATP. L-serine is bound at residue E286. ATP is bound at residue 350-353 (EISS). S385 contacts L-serine.

Belongs to the class-II aminoacyl-tRNA synthetase family. Type-1 seryl-tRNA synthetase subfamily. In terms of assembly, homodimer. The tRNA molecule binds across the dimer.

It is found in the cytoplasm. The catalysed reaction is tRNA(Ser) + L-serine + ATP = L-seryl-tRNA(Ser) + AMP + diphosphate + H(+). It carries out the reaction tRNA(Sec) + L-serine + ATP = L-seryl-tRNA(Sec) + AMP + diphosphate + H(+). Its pathway is aminoacyl-tRNA biosynthesis; selenocysteinyl-tRNA(Sec) biosynthesis; L-seryl-tRNA(Sec) from L-serine and tRNA(Sec): step 1/1. Catalyzes the attachment of serine to tRNA(Ser). Is also able to aminoacylate tRNA(Sec) with serine, to form the misacylated tRNA L-seryl-tRNA(Sec), which will be further converted into selenocysteinyl-tRNA(Sec). The protein is Serine--tRNA ligase of Pediococcus pentosaceus (strain ATCC 25745 / CCUG 21536 / LMG 10740 / 183-1w).